We begin with the raw amino-acid sequence, 303 residues long: ATP phosphoribosyltransferase (303 aa).

It belongs to the ATP phosphoribosyltransferase family. Long subfamily. Mg(2+) serves as cofactor.

Its subcellular location is the cytoplasm. It catalyses the reaction 1-(5-phospho-beta-D-ribosyl)-ATP + diphosphate = 5-phospho-alpha-D-ribose 1-diphosphate + ATP. Its pathway is amino-acid biosynthesis; L-histidine biosynthesis; L-histidine from 5-phospho-alpha-D-ribose 1-diphosphate: step 1/9. Its activity is regulated as follows. Feedback inhibited by histidine. Its function is as follows. Catalyzes the condensation of ATP and 5-phosphoribose 1-diphosphate to form N'-(5'-phosphoribosyl)-ATP (PR-ATP). Has a crucial role in the pathway because the rate of histidine biosynthesis seems to be controlled primarily by regulation of HisG enzymatic activity. In Haemophilus influenzae (strain 86-028NP), this protein is ATP phosphoribosyltransferase.